The following is a 672-amino-acid chain: Acetoacetyl-CoA synthetase (672 aa).

Belongs to the ATP-dependent AMP-binding enzyme family.

It is found in the cytoplasm. Its subcellular location is the cytosol. It catalyses the reaction acetoacetate + ATP + CoA = acetoacetyl-CoA + AMP + diphosphate. Activates acetoacetate to acetoacetyl-CoA. The protein is Acetoacetyl-CoA synthetase (aacs) of Xenopus tropicalis (Western clawed frog).